A 100-amino-acid polypeptide reads, in one-letter code: MDLTPREKDKLLLFTAGLLAERRKAKGLKLNHPEAVALISCAIMEGAREGRSVAEMMDAGGQVLTREDVMEGVAEMIPEVQVEATFPDGVKLVTVHEPIR.

Belongs to the urease gamma subunit family. Heterotrimer of UreA (gamma), UreB (beta) and UreC (alpha) subunits. Three heterotrimers associate to form the active enzyme.

The protein localises to the cytoplasm. The enzyme catalyses urea + 2 H2O + H(+) = hydrogencarbonate + 2 NH4(+). It participates in nitrogen metabolism; urea degradation; CO(2) and NH(3) from urea (urease route): step 1/1. This is Urease subunit gamma from Alkalilimnicola ehrlichii (strain ATCC BAA-1101 / DSM 17681 / MLHE-1).